Consider the following 876-residue polypeptide: AP-1 complex subunit gamma-1 (876 aa).

HEAT repeat units lie at residues 97 to 135 (DERQ…ICSA), 136 to 173 (EMAR…KVPD), 248 to 284 (FLHI…KTES), 308 to 345 (SLRV…FDDQ), 346 to 382 (AVQR…ENNV), 384 to 417 (QLTK…KFSP), 418 to 454 (EKLW…NASE), 506 to 545 (VTES…RFPS), and 560 to 599 (SLLL…ATFN). Residues 756–873 (PAYAPIVAYE…LEEGQVSNFP (118 aa)) form the GAE domain.

The protein belongs to the adaptor complexes large subunit family. As to quaternary structure, adaptor protein complex 1 (AP-1) is a heterotetramer composed of two large adaptins (gamma-type subunit and beta-type subunit), a medium adaptin (mu-type subunit) and a small adaptin (sigma-type subunit). Binds to EPSIN1. Interacts with DRP2A/ADL6 (via C-terminus).

The protein localises to the golgi apparatus. It is found in the cytoplasmic vesicle. It localises to the clathrin-coated vesicle membrane. In terms of biological role, subunit of clathrin-associated adaptor protein complex 1 that plays a role in protein sorting at the trans-Golgi network and early endosomes (TGN/EE). The AP complexes mediate both the recruitment of clathrin to membranes and the recognition of sorting signals within the cytosolic tails of transmembrane cargo molecules. The chain is AP-1 complex subunit gamma-1 (GAMMA-ADR) from Arabidopsis thaliana (Mouse-ear cress).